A 158-amino-acid chain; its full sequence is UPF0266 membrane protein YobD (158 aa).

The next 3 helical transmembrane spans lie at 6 to 26 (LVLI…QFIM), 45 to 65 (IDSV…VTNH), and 67 to 87 (ALIT…IFWI).

The protein belongs to the UPF0266 family.

The protein resides in the cell inner membrane. The protein is UPF0266 membrane protein YobD of Shigella boydii serotype 4 (strain Sb227).